The primary structure comprises 558 residues: Glutamine--tRNA ligase (558 aa).

The short motif at 34–44 is the 'HIGH' region element; it reads PEPNGYLHIGH. Residues 35 to 37 and 41 to 47 contribute to the ATP site; these read EPN and HIGHAKS. Residues Asp67 and Tyr212 each contribute to the L-glutamine site. ATP-binding positions include Thr231, 261-262, and 269-271; these read RL and LSK. The short motif at 268-272 is the 'KMSKS' region element; that stretch reads VLSKR.

The protein belongs to the class-I aminoacyl-tRNA synthetase family. As to quaternary structure, monomer.

It localises to the cytoplasm. It catalyses the reaction tRNA(Gln) + L-glutamine + ATP = L-glutaminyl-tRNA(Gln) + AMP + diphosphate. This is Glutamine--tRNA ligase from Pseudoalteromonas atlantica (strain T6c / ATCC BAA-1087).